Reading from the N-terminus, the 179-residue chain is Large ribosomal subunit protein uL6 (179 aa).

It belongs to the universal ribosomal protein uL6 family. As to quaternary structure, part of the 50S ribosomal subunit.

This protein binds to the 23S rRNA, and is important in its secondary structure. It is located near the subunit interface in the base of the L7/L12 stalk, and near the tRNA binding site of the peptidyltransferase center. The sequence is that of Large ribosomal subunit protein uL6 from Trichlorobacter lovleyi (strain ATCC BAA-1151 / DSM 17278 / SZ) (Geobacter lovleyi).